The primary structure comprises 290 residues: 4-hydroxybenzoate octaprenyltransferase (290 aa).

8 helical membrane-spanning segments follow: residues 23-43 (IGAL…TPGV), 46-66 (LWIL…GCVV), 99-119 (LFVV…TMTI), 141-161 (LPQV…FAAV), 163-183 (ESVP…AVAY), 213-233 (LIIG…GELN), 234-254 (GLGW…VYQQ), and 268-288 (AFMN…MSYW).

It belongs to the UbiA prenyltransferase family. Mg(2+) is required as a cofactor.

Its subcellular location is the cell inner membrane. The enzyme catalyses all-trans-octaprenyl diphosphate + 4-hydroxybenzoate = 4-hydroxy-3-(all-trans-octaprenyl)benzoate + diphosphate. The protein operates within cofactor biosynthesis; ubiquinone biosynthesis. Its function is as follows. Catalyzes the prenylation of para-hydroxybenzoate (PHB) with an all-trans polyprenyl group. Mediates the second step in the final reaction sequence of ubiquinone-8 (UQ-8) biosynthesis, which is the condensation of the polyisoprenoid side chain with PHB, generating the first membrane-bound Q intermediate 3-octaprenyl-4-hydroxybenzoate. This is 4-hydroxybenzoate octaprenyltransferase from Escherichia coli (strain SE11).